Consider the following 94-residue polypeptide: U27-theraphotoxin-Cg1a (94 aa).

An N-terminal signal peptide occupies residues 1-22 (MIFLLPPVIFVMLLAESVLILG). Positions 23 to 58 (DSEDADLMEMVQMSRPFFNPIIPAVEFVDLREERQR) are excised as a propeptide. Disulfide bonds link cysteine 60–cysteine 78, cysteine 67–cysteine 83, and cysteine 77–cysteine 88.

It belongs to the neurotoxin 14 (magi-1) family. OAIP-1 subfamily. Expressed by the venom gland.

The protein localises to the secreted. Its function is as follows. Probable ion channel inhibitor. This is U27-theraphotoxin-Cg1a from Chilobrachys guangxiensis (Chinese earth tiger tarantula).